A 321-amino-acid polypeptide reads, in one-letter code: Probable GDP-L-fucose synthase (321 aa).

Residue glycine 8 to glycine 14 coordinates NADP(+). Tyrosine 136 functions as the Proton donor/acceptor in the catalytic mechanism. NADP(+)-binding positions include lysine 140, proline 163 to isoleucine 166, and histidine 179. 3 residues coordinate substrate: arginine 187, arginine 215, and aspartate 277.

Belongs to the NAD(P)-dependent epimerase/dehydratase family. Fucose synthase subfamily. As to quaternary structure, homodimer.

It catalyses the reaction GDP-beta-L-fucose + NADP(+) = GDP-4-dehydro-alpha-D-rhamnose + NADPH + H(+). Its pathway is nucleotide-sugar biosynthesis; GDP-L-fucose biosynthesis via de novo pathway; GDP-L-fucose from GDP-alpha-D-mannose: step 2/2. Functionally, catalyzes the two-step NADP-dependent conversion of GDP-4-dehydro-6-deoxy-D-mannose to GDP-fucose, involving an epimerase and a reductase reaction. The protein is Probable GDP-L-fucose synthase (Gmer) of Drosophila melanogaster (Fruit fly).